The following is a 189-amino-acid chain: MEIKPITIYTGKTVPLFYDNIDTDQIIPKVHLKRVSKSGFGPFAFDEWRYLPDGSDNPDFNPNKPKYHGASILITGDNFGCGSSREHAAWALKDYGFNIIIAGSFSDIFYMNCTKNAMLPICLNQKEREHLAQFDEITVDLPNQTVSTVSQSFHFDIDETWKNKLIHGLDDIAITLQFENLIEKYEKTF.

It belongs to the LeuD family. LeuD type 1 subfamily. As to quaternary structure, heterodimer of LeuC and LeuD.

It catalyses the reaction (2R,3S)-3-isopropylmalate = (2S)-2-isopropylmalate. It functions in the pathway amino-acid biosynthesis; L-leucine biosynthesis; L-leucine from 3-methyl-2-oxobutanoate: step 2/4. Its function is as follows. Catalyzes the isomerization between 2-isopropylmalate and 3-isopropylmalate, via the formation of 2-isopropylmaleate. The protein is 3-isopropylmalate dehydratase small subunit of Staphylococcus epidermidis (strain ATCC 35984 / DSM 28319 / BCRC 17069 / CCUG 31568 / BM 3577 / RP62A).